Consider the following 258-residue polypeptide: Probable splicing factor, arginine/serine-rich 3 (258 aa).

In terms of domain architecture, RRM 1 spans 9–83; the sequence is QKVYVGNLPG…RRIRVEFTRG (75 aa). Disordered stretches follow at residues 81–120 and 190–258; these read TRGV…PQRR and AYIR…PSPQ. Residues 97-107 are compositionally biased toward basic and acidic residues; it reads GGDHRGGDFRG. The segment covering 108 to 117 has biased composition (gly residues); it reads GRGGGRGGGP. Residues 123-197 enclose the RRM 2 domain; it reads YRVIVEGLPP…ETAYIRVRED (75 aa). Residues 208–223 are compositionally biased toward basic and acidic residues; it reads GRDRSRSRSPRAERRA. Residues 228–246 are compositionally biased toward basic residues; that stretch reads SPRRSRSRSRSRSRSRSRS. Residues 247–258 show a composition bias toward low complexity; the sequence is ASRSPSRSPSPQ.

This sequence belongs to the splicing factor SR family. In terms of assembly, interacts with spk-1. Directly phosphorylated by spk-1 in vitro on serine residues of the RS domain. As to expression, predominantly coexpressed with spk-1 in adult hermaphrodite germlines.

It localises to the nucleus. Its function is as follows. Plays an essential role in embryogenesis. The sequence is that of Probable splicing factor, arginine/serine-rich 3 (rsp-3) from Caenorhabditis elegans.